Consider the following 157-residue polypeptide: S-ribosylhomocysteine lyase (157 aa).

Positions 54, 58, and 124 each coordinate Fe cation.

This sequence belongs to the LuxS family. In terms of assembly, homodimer. Requires Fe cation as cofactor.

The enzyme catalyses S-(5-deoxy-D-ribos-5-yl)-L-homocysteine = (S)-4,5-dihydroxypentane-2,3-dione + L-homocysteine. Functionally, involved in the synthesis of autoinducer 2 (AI-2) which is secreted by bacteria and is used to communicate both the cell density and the metabolic potential of the environment. The regulation of gene expression in response to changes in cell density is called quorum sensing. Catalyzes the transformation of S-ribosylhomocysteine (RHC) to homocysteine (HC) and 4,5-dihydroxy-2,3-pentadione (DPD). In Levilactobacillus brevis (strain ATCC 367 / BCRC 12310 / CIP 105137 / JCM 1170 / LMG 11437 / NCIMB 947 / NCTC 947) (Lactobacillus brevis), this protein is S-ribosylhomocysteine lyase.